Reading from the N-terminus, the 122-residue chain is Large ribosomal subunit protein uL14c (122 aa).

The protein belongs to the universal ribosomal protein uL14 family. As to quaternary structure, part of the 50S ribosomal subunit.

It localises to the plastid. The protein localises to the chloroplast. Binds to 23S rRNA. In Cycas taitungensis (Prince sago), this protein is Large ribosomal subunit protein uL14c.